Reading from the N-terminus, the 401-residue chain is Tyrosine--tRNA ligase (401 aa).

Residues 43–52 carry the 'HIGH' region motif; sequence PTAPDLHLGH. The short motif at 227-231 is the 'KMSKS' region element; that stretch reads KMSKS. Lys230 is a binding site for ATP. The S4 RNA-binding domain occupies 338-399; the sequence is MAIGNVLKEA…GKRRFAKINL (62 aa).

This sequence belongs to the class-I aminoacyl-tRNA synthetase family. TyrS type 2 subfamily. Homodimer.

The protein resides in the cytoplasm. It carries out the reaction tRNA(Tyr) + L-tyrosine + ATP = L-tyrosyl-tRNA(Tyr) + AMP + diphosphate + H(+). Functionally, catalyzes the attachment of tyrosine to tRNA(Tyr) in a two-step reaction: tyrosine is first activated by ATP to form Tyr-AMP and then transferred to the acceptor end of tRNA(Tyr). The chain is Tyrosine--tRNA ligase from Idiomarina loihiensis (strain ATCC BAA-735 / DSM 15497 / L2-TR).